Reading from the N-terminus, the 322-residue chain is Lipoyl synthase (322 aa).

Positions 69, 74, 80, 95, 99, 102, and 309 each coordinate [4Fe-4S] cluster. Residues 81–298 enclose the Radical SAM core domain; that stretch reads FNHGTATFMI…GVKAKALGFD (218 aa).

This sequence belongs to the radical SAM superfamily. Lipoyl synthase family. It depends on [4Fe-4S] cluster as a cofactor.

The protein resides in the cytoplasm. The enzyme catalyses [[Fe-S] cluster scaffold protein carrying a second [4Fe-4S](2+) cluster] + N(6)-octanoyl-L-lysyl-[protein] + 2 oxidized [2Fe-2S]-[ferredoxin] + 2 S-adenosyl-L-methionine + 4 H(+) = [[Fe-S] cluster scaffold protein] + N(6)-[(R)-dihydrolipoyl]-L-lysyl-[protein] + 4 Fe(3+) + 2 hydrogen sulfide + 2 5'-deoxyadenosine + 2 L-methionine + 2 reduced [2Fe-2S]-[ferredoxin]. It participates in protein modification; protein lipoylation via endogenous pathway; protein N(6)-(lipoyl)lysine from octanoyl-[acyl-carrier-protein]: step 2/2. Its function is as follows. Catalyzes the radical-mediated insertion of two sulfur atoms into the C-6 and C-8 positions of the octanoyl moiety bound to the lipoyl domains of lipoate-dependent enzymes, thereby converting the octanoylated domains into lipoylated derivatives. The polypeptide is Lipoyl synthase (Psychromonas ingrahamii (strain DSM 17664 / CCUG 51855 / 37)).